Here is a 279-residue protein sequence, read N- to C-terminus: Acetylglutamate kinase (279 aa).

Residues 64-65 (GG), R86, and N177 contribute to the substrate site.

Belongs to the acetylglutamate kinase family. ArgB subfamily.

Its subcellular location is the cytoplasm. The enzyme catalyses N-acetyl-L-glutamate + ATP = N-acetyl-L-glutamyl 5-phosphate + ADP. It functions in the pathway amino-acid biosynthesis; L-arginine biosynthesis; N(2)-acetyl-L-ornithine from L-glutamate: step 2/4. In terms of biological role, catalyzes the ATP-dependent phosphorylation of N-acetyl-L-glutamate. This is Acetylglutamate kinase from Campylobacter jejuni subsp. jejuni serotype O:23/36 (strain 81-176).